Reading from the N-terminus, the 954-residue chain is MRIRGVKPFASAVGLLLGLLYAVDAAKVNKHKPWIETTYHGIVTENDDKVLLDPPLIALDKDAPLRYAGEICGFRIHGQNVPFEAVVLDKSTGEGVIRAKDKLDCELQKEHTFTIQAYDCGEGPDGGNMKKSHKATVHIQVNDVNEYSPVFKEKSYKATVIEGKKYDSIMKVEAVDADCSFQFSQICSYEIVTPDVPFTIDKDGNIKNTEKLNYGKERMYKLTVTAYDCGKNRASEDVLVKINIKPTCKPSWQGFNKRIEYEPGTGSLALFPSMHLETCEEPITSIQASIMLETNHIGKGCDRDTYSEKSLHKLCGASSGTVELLPAPSNSANWTVGLPTDNGHDSDQVFEFNGTQAIKVPEGVVSTTLKEPFTISVWMRHGPGGREKETILCNSDKTEMNRHHYSLYVHNCRLVLLLRQEPTESESYKPAEFHWKLDQVCDKEWHHYVLNIEFPAVTLFVDGGTFEPFLVTEDYPLHTSKIETQLTIGACWQGGSARMTQFFRGNLAGLMIRSGKLENKKVIDCLYTCKEGLDVQLPEEVASAVKVEFNPNQSSLSLEGDDIESFEKVMQHISYLNSRQFPTPGIRHLRVSTTVKCFNEETCISVPDSEGYVMVLQPEEPKISLSGIDHFARGAAEFESVEGVTLFPELRIVSTITREVEVEAEAETEAEGEDDPTVQETVVSEEIMHNLDTCEVTVVGEDLNGDHESLEVDLAQIQQRALEMSSSNVGMVITGVNTMANYEQVLHLIRYRNWHTEALFDRKFKLVCSELNGRYISNEFKVEVNVIHTANPMDHANNAMVQPQFISQVQHASVDLSGHNLVNTHQASVVPSAATIVIVVCVSFLVFMIILGVFRIRAAHQRTMRDQENGKENEMDWDDSALTITVNPMETYEDQHSSEEEGDEEEEESEDGEEEDDITSAESDSSEDEAGEQEDQQGSSRQQQLEWDDSTLTY.

The first 25 residues, 1–25 (MRIRGVKPFASAVGLLLGLLYAVDA), serve as a signal peptide directing secretion. At 26-833 (AKVNKHKPWI…THQASVVPSA (808 aa)) the chain is on the extracellular side. 2 Cadherin domains span residues 35–151 (IETT…SPVF) and 152–252 (KEKS…KPSW). N-linked (GlcNAc...) asparagine glycosylation is found at Asn-333, Asn-353, and Asn-552. The helical transmembrane segment at 834 to 854 (ATIVIVVCVSFLVFMIILGVF) threads the bilayer. The Cytoplasmic segment spans residues 855–954 (RIRAAHQRTM…LEWDDSTLTY (100 aa)). The disordered stretch occupies residues 891 to 954 (TYEDQHSSEE…LEWDDSTLTY (64 aa)). Residues 900–935 (EEGDEEEEESEDGEEEDDITSAESDSSEDEAGEQED) are compositionally biased toward acidic residues.

It belongs to the calsyntenin family. In terms of assembly, homooligomer and heterooligomer; mediates both homophilic and heterophilc interactions with clstn2 and clstn3 paralogs via cadherin domains. By 48 hours post-fertilization (hpf), widely expressed in the brain, with strong expression in the telencephalon and the midbrain.

It is found in the postsynaptic cell membrane. The protein localises to the endoplasmic reticulum membrane. Its subcellular location is the golgi apparatus membrane. The protein resides in the cell projection. It localises to the neuron projection. In terms of biological role, postsynaptic adhesion molecule involved in vesicle trafficking; required for branching of peripheral but not central axons of sensory neurons. Promotes synapse development by acting as a cell adhesion molecule at the postsynaptic membrane, which associates with presynaptic neurexins. This chain is Calsyntenin-1, found in Danio rerio (Zebrafish).